Here is a 333-residue protein sequence, read N- to C-terminus: Atrochrysone carboxyl ACP thioesterase (333 aa).

Residues histidine 104, histidine 106, aspartate 108, and histidine 109 each coordinate Zn(2+). Residue aspartate 108 is the Proton donor/acceptor of the active site.

This sequence belongs to the metallo-beta-lactamase superfamily. The cofactor is Zn(2+).

The enzyme catalyses atrochrysone carboxyl-[ACP] + H2O = atrochrysone carboxylate + holo-[ACP] + H(+). Its pathway is pigment biosynthesis. Its function is as follows. Atrochrysone carboxyl ACP thioesterase; part of the gene cluster that mediates the biosynthesis of the bianthraquinone cladofulvin, a conidial pigment not required for virulence but that plays a role in fitness and resistance to environmental stresses including UV light and low-temperature stress. The pathway begins with the synthesis of atrochrysone thioester by the polyketide synthase (PKS) claG. The atrochrysone carboxyl ACP thioesterase claF then breaks the thioester bond and releases the atrochrysone carboxylic acid from claG. This compound is decarboxylated by claH to yield emodin, which is further converted to chrysophanol hydroquinone by the reductase claC and the dehydratase claB. The cytochrome P450 monooxygenase claM then catalyzes the dimerization of nataloe-emodin to cladofulvin. This Passalora fulva (Tomato leaf mold) protein is Atrochrysone carboxyl ACP thioesterase.